Consider the following 503-residue polypeptide: Trehalose-6-phosphate synthase (503 aa).

Residues 1-14 (MTDQSGNGVRSGSA) are compositionally biased toward polar residues. A disordered region spans residues 1–20 (MTDQSGNGVRSGSASEAPPS). Arginine 31 provides a ligand contact to D-glucose 6-phosphate. Residue 51 to 52 (GG) coordinates UDP-alpha-D-glucose. D-glucose 6-phosphate-binding residues include tyrosine 109 and aspartate 163. 2 residues coordinate UDP-alpha-D-glucose: arginine 305 and lysine 310. Arginine 343 lines the D-glucose 6-phosphate pocket. Residue 408-412 (LVAKE) participates in UDP-alpha-D-glucose binding.

Belongs to the glycosyltransferase 20 family. In terms of assembly, homotetramer.

The enzyme catalyses ADP-alpha-D-glucose + D-glucose 6-phosphate = alpha,alpha-trehalose 6-phosphate + ADP + H(+). It catalyses the reaction CDP-alpha-D-glucose + D-glucose 6-phosphate = alpha,alpha-trehalose 6-phosphate + CDP + H(+). It carries out the reaction GDP-alpha-D-glucose + D-glucose 6-phosphate = alpha,alpha-trehalose 6-phosphate + GDP + H(+). The catalysed reaction is TDP-alpha-D-glucose + D-glucose 6-phosphate = 5-methyl-UDP + alpha,alpha-trehalose 6-phosphate + H(+). The enzyme catalyses D-glucose 6-phosphate + UDP-alpha-D-glucose = alpha,alpha-trehalose 6-phosphate + UDP + H(+). The protein operates within glycan biosynthesis; trehalose biosynthesis. Probably involved in the osmoprotection via the biosynthesis of trehalose and in the production of glycogen and alpha-glucan via the TreS-Pep2 branch involved in the biosynthesis of maltose-1-phosphate (M1P). Catalyzes the transfer of glucose from UDP-glucose (UDP-Glc) to D-glucose 6-phosphate (Glc-6-P) to form trehalose-6-phosphate. Probably also able to use ADP-Glc, CDP-Glc, GDP-Glc and TDP-Glc as glucosyl donors. In Mycolicibacterium gilvum (strain PYR-GCK) (Mycobacterium gilvum (strain PYR-GCK)), this protein is Trehalose-6-phosphate synthase.